We begin with the raw amino-acid sequence, 216 residues long: Probable nicotinate-nucleotide adenylyltransferase (216 aa).

This sequence belongs to the NadD family.

The catalysed reaction is nicotinate beta-D-ribonucleotide + ATP + H(+) = deamido-NAD(+) + diphosphate. Its pathway is cofactor biosynthesis; NAD(+) biosynthesis; deamido-NAD(+) from nicotinate D-ribonucleotide: step 1/1. In terms of biological role, catalyzes the reversible adenylation of nicotinate mononucleotide (NaMN) to nicotinic acid adenine dinucleotide (NaAD). This is Probable nicotinate-nucleotide adenylyltransferase from Desulfatibacillum aliphaticivorans.